Here is a 239-residue protein sequence, read N- to C-terminus: Ribonuclease PH (239 aa).

Phosphate-binding positions include Arg-86 and 124–126 (GTR).

The protein belongs to the RNase PH family. Homohexameric ring arranged as a trimer of dimers.

It carries out the reaction tRNA(n+1) + phosphate = tRNA(n) + a ribonucleoside 5'-diphosphate. Its function is as follows. Phosphorolytic 3'-5' exoribonuclease that plays an important role in tRNA 3'-end maturation. Removes nucleotide residues following the 3'-CCA terminus of tRNAs; can also add nucleotides to the ends of RNA molecules by using nucleoside diphosphates as substrates, but this may not be physiologically important. Probably plays a role in initiation of 16S rRNA degradation (leading to ribosome degradation) during starvation. The chain is Ribonuclease PH from Aromatoleum aromaticum (strain DSM 19018 / LMG 30748 / EbN1) (Azoarcus sp. (strain EbN1)).